The following is a 380-amino-acid chain: Ribosomal RNA large subunit methyltransferase F (380 aa).

Residues 1-32 (MSHKTKPSTQERKAGKPSAPKRKVISKSPNSK) are disordered.

It belongs to the methyltransferase superfamily. METTL16/RlmF family.

It localises to the cytoplasm. It catalyses the reaction adenosine(1618) in 23S rRNA + S-adenosyl-L-methionine = N(6)-methyladenosine(1618) in 23S rRNA + S-adenosyl-L-homocysteine + H(+). In terms of biological role, specifically methylates the adenine in position 1618 of 23S rRNA. This is Ribosomal RNA large subunit methyltransferase F from Shewanella halifaxensis (strain HAW-EB4).